Reading from the N-terminus, the 94-residue chain is Large ribosomal subunit protein bL27 (94 aa).

Residues 1–25 (MAHKKGTGSTRNGRDSQSKRLGVKR) form a disordered region.

The protein belongs to the bacterial ribosomal protein bL27 family.

The polypeptide is Large ribosomal subunit protein bL27 (Gloeothece citriformis (strain PCC 7424) (Cyanothece sp. (strain PCC 7424))).